The following is a 1384-amino-acid chain: Protein Gawky (1384 aa).

Disordered stretches follow at residues 1–99, 148–227, 263–335, and 447–501; these read MREA…VWTG, NGSS…DPRG, TAST…DDGT, and VGAP…SGWS. The required for interaction with AGO1 stretch occupies residues 1–205; sequence MREALFSQDG…HRGGNGSGAT (205 aa). 2 sufficient for miRNA-mediated silencing regions span residues 1–605 and 605–830; these read MREA…SLGS and SYAD…SVHL. Positions 15 to 24 are enriched in polar residues; that stretch reads HVNQDTNWEV. Positions 150 to 171 are enriched in low complexity; that stretch reads SSNITGSSGVATGSSGNSSNAG. The minimal N-terminal region required for miRNA-mediated silencing stretch occupies residues 205 to 490; it reads TSSDPRDIRM…GVSWGNKQSK (286 aa). Basic and acidic residues predominate over residues 208–225; that stretch reads DPRDIRMIDPRDPIRGDP. 2 stretches are compositionally biased toward polar residues: residues 449–475 and 485–501; these read APSS…NSWS and GNKQ…SGWS. Residues 547–588 enclose the UBA domain; the sequence is IIKQSKQYRILVENGFKKEDVERALVIANMNIEEAADMLRAN. 7 disordered regions span residues 607–626, 809–841, 889–942, 962–1022, 1052–1102, 1188–1221, and 1318–1368; these read ADHN…PVNS, QNMQ…LRGH, TEFS…NKDW, EPGK…LSSS, TSPL…GVQT, SENE…GVGT, and GTAN…PSGR. Positions 809 to 826 are enriched in low complexity; that stretch reads QNMQPTSQQQQPQQQQLP. The interval 862 to 1115 is not required for interaction with AGO1 or miRNAs or for localization to P-bodies but necessary for miRNA-mediated silencing and for interaction with pAbp; the sequence is YQGASNQQSR…NWTGGNTTWG (254 aa). Residues 898–924 are compositionally biased toward polar residues; the sequence is TKQNLTANTSNINSLGLQNDSTWSTGR. Residues 940 to 1215 form a sufficient for miRNA-mediated silencing region; it reads KDWSVAQPTS…TSSSGTSGGN (276 aa). Positions 1010-1022 are enriched in low complexity; that stretch reads SPTDLPPLSLSSS. Positions 1052–1061 are enriched in polar residues; it reads TSPLNKSSSR. Positions 1068-1084 are enriched in low complexity; that stretch reads TANSNKSANSNASTPTT. An RRM domain is found at 1117–1189; sequence SWLLLKNLTA…TTIFAESPSE (73 aa). Positions 1188 to 1203 are enriched in polar residues; the sequence is SENEVQSIMQHLPQTP. The not required for interaction with AGO1 or miRNAs or for localization to P-bodies but necessary for miRNA-mediated silencing, dissociation from AGO1 and miRNAs and interaction with pAbp stretch occupies residues 1200–1384; it reads PQTPSSTSSS…ISLVYSIVDD (185 aa). Residues 1211-1220 show a composition bias toward gly residues; it reads TSGGNVGGVG. Residues 1318 to 1349 show a composition bias toward low complexity; it reads GTANSSGSKSSANNLASGQSSASNLTNSTNST. Over residues 1350-1365 the composition is skewed to polar residues; that stretch reads WRQTSQNQALQSQSRP.

Belongs to the GW182 family. In terms of assembly, component of the miRNA-directed RNA-induced silencing complex (miRISC), composed of at least AGO1 and gw, which bind mature miRNAs and targets the selective destruction of homologous RNAs. Interacts (via N-terminal region) with AGO1 (via Piwi domain); the interaction is essential for localization of AGO1 in P-bodies and for miRNA-mediated silencing. Interacts with pAbp/PABPC1; this interaction interferes with the binding of pAbp to eIF4G and is required for miRNA-mediated silencing. Interacts with CCR4-NOT complex members Not1, Rga/NOT2, twin/CCR4, Pop2 and NOT3/5 and with PAN complex members CG8232/PAN2 and CG11486/PAN3.

The protein localises to the cytoplasm. It localises to the P-body. Required for gene silencing mediated by micro-RNAs (miRNAs). Silences both polyadenylated and deadenylated mRNAs. Required for miRNA-mediated translational repression and mRNA decay. Not required for miRNA target recognition. Necessary to initiate but not to maintain silencing. Promotes mRNA deadenylation through the recruitment of the CCR4-NOT and PAN complexes and promotes decapping by the DCP1-DCP2 complex. Dissociates from silenced mRNAs after deadenylation. Required for completion of nuclear divisions during early embryonic development. The protein is Protein Gawky of Drosophila melanogaster (Fruit fly).